The sequence spans 310 residues: Protein DOS2 (310 aa).

2 stretches are compositionally biased toward basic and acidic residues: residues 15 to 26 and 135 to 146; these read DKISNSHTKETG and SNDKDENSKENE. Disordered regions lie at residues 15–45 and 131–151; these read DKISNSHTKETGSTENTENNELQSRDDKTNE and AENDSNDKDENSKENEIAVGG. The region spanning 176–228 is the BSD domain; the sequence is QLDPFDVDEKTEEICSILQGDKDISKLMNDIVPHKISYKDFWHIYFLQRNKIL. Positions 240 to 310 are disordered; the sequence is KKEKETEEKE…KDDDDDDDWE (71 aa). Residues 247-263 are compositionally biased toward acidic residues; sequence EKEVEWDDEEEEEDDDK. 2 stretches are compositionally biased toward basic and acidic residues: residues 264–276 and 284–300; these read VEAVADNKSKGET and GLKDVSDHVGLANKDES. Residues 301 to 310 show a composition bias toward acidic residues; it reads KDDDDDDDWE.

Functionally, acts in ubiquitin metabolism and is necessary for the control of single-copy DNA replication. The sequence is that of Protein DOS2 (DOS2) from Saccharomyces cerevisiae (strain ATCC 204508 / S288c) (Baker's yeast).